We begin with the raw amino-acid sequence, 256 residues long: uncharacterized protein (256 aa).

Residues 187–223 (MEEEEISEVEDALNVLQRLCAQEEGDNKEAETNNNNY) are a coiled coil.

This is an uncharacterized protein from Ostreid herpesvirus 1 (isolate France) (OsHV-1).